The primary structure comprises 218 residues: Guanylate kinase (218 aa).

The Guanylate kinase-like domain occupies 10–190 (GLLIILSSPS…TEERLKTIIT (181 aa)). 17–24 (SPSGAGKS) contacts ATP.

This sequence belongs to the guanylate kinase family.

Its subcellular location is the cytoplasm. The enzyme catalyses GMP + ATP = GDP + ADP. Its function is as follows. Essential for recycling GMP and indirectly, cGMP. This chain is Guanylate kinase, found in Jannaschia sp. (strain CCS1).